A 108-amino-acid polypeptide reads, in one-letter code: Nucleoid-associated protein mma_2329 (108 aa).

It belongs to the YbaB/EbfC family. As to quaternary structure, homodimer.

The protein resides in the cytoplasm. Its subcellular location is the nucleoid. In terms of biological role, binds to DNA and alters its conformation. May be involved in regulation of gene expression, nucleoid organization and DNA protection. This Janthinobacterium sp. (strain Marseille) (Minibacterium massiliensis) protein is Nucleoid-associated protein mma_2329.